Here is a 582-residue protein sequence, read N- to C-terminus: ATP-dependent lipid A-core flippase (582 aa).

Helical transmembrane passes span 16-36, 64-84, 153-173, 253-273, and 275-295; these read LWPT…ALIL, LLWM…TSYI, IIGL…ILVV, PIIQ…ASFP, and VMDS…IALM. The ABC transmembrane type-1 domain occupies 28 to 310; it reads IVAGIALILN…LTNVNAQFQR (283 aa). An ABC transporter domain is found at 342-578; that stretch reads LEFRNVTFTY…HGVYAQLHKM (237 aa). Residue 376–383 participates in ATP binding; it reads GRSGSGKS.

This sequence belongs to the ABC transporter superfamily. Lipid exporter (TC 3.A.1.106) family. Homodimer.

It localises to the cell inner membrane. It catalyses the reaction ATP + H2O + lipid A-core oligosaccharideSide 1 = ADP + phosphate + lipid A-core oligosaccharideSide 2.. In terms of biological role, involved in lipopolysaccharide (LPS) biosynthesis. Translocates lipid A-core from the inner to the outer leaflet of the inner membrane. Transmembrane domains (TMD) form a pore in the inner membrane and the ATP-binding domain (NBD) is responsible for energy generation. The chain is ATP-dependent lipid A-core flippase from Salmonella paratyphi A (strain ATCC 9150 / SARB42).